The following is a 91-amino-acid chain: MPRPTGKKFDKRRQQQNPLFKRKKFCRFTAAGVEQIDYKDTETLKDFIGENGKITPARLTGTKAHYQRQLDTAIKRARFLALLPYTDQHKA.

It belongs to the bacterial ribosomal protein bS18 family. Part of the 30S ribosomal subunit. Forms a tight heterodimer with protein bS6.

In terms of biological role, binds as a heterodimer with protein bS6 to the central domain of the 16S rRNA, where it helps stabilize the platform of the 30S subunit. The polypeptide is Small ribosomal subunit protein bS18 (Burkholderia lata (strain ATCC 17760 / DSM 23089 / LMG 22485 / NCIMB 9086 / R18194 / 383)).